The chain runs to 421 residues: Enolase (421 aa).

Glutamine 165 serves as a coordination point for (2R)-2-phosphoglycerate. Glutamate 207 (proton donor) is an active-site residue. Positions 244, 285, and 312 each coordinate Mg(2+). (2R)-2-phosphoglycerate is bound by residues lysine 337, arginine 366, serine 367, and lysine 388. The active-site Proton acceptor is lysine 337.

Belongs to the enolase family. Mg(2+) serves as cofactor.

It localises to the cytoplasm. The protein resides in the secreted. Its subcellular location is the cell surface. The catalysed reaction is (2R)-2-phosphoglycerate = phosphoenolpyruvate + H2O. It participates in carbohydrate degradation; glycolysis; pyruvate from D-glyceraldehyde 3-phosphate: step 4/5. Functionally, catalyzes the reversible conversion of 2-phosphoglycerate (2-PG) into phosphoenolpyruvate (PEP). It is essential for the degradation of carbohydrates via glycolysis. The chain is Enolase from Ehrlichia canis (strain Jake).